The primary structure comprises 205 residues: Probable GTP-binding protein EngB (205 aa).

Positions 22-194 (ELPEIAFAGR…WESILDLCEI (173 aa)) constitute an EngB-type G domain. Residues 30 to 37 (GRSNVGKS), 57 to 61 (GRTQL), 75 to 78 (DLPG), 142 to 145 (TKAD), and 173 to 175 (FSA) contribute to the GTP site. 2 residues coordinate Mg(2+): S37 and T59.

It belongs to the TRAFAC class TrmE-Era-EngA-EngB-Septin-like GTPase superfamily. EngB GTPase family. The cofactor is Mg(2+).

In terms of biological role, necessary for normal cell division and for the maintenance of normal septation. The protein is Probable GTP-binding protein EngB of Desulfatibacillum aliphaticivorans.